A 576-amino-acid chain; its full sequence is RNA-binding post-transcriptional regulator cip2 (576 aa).

The RRM domain occupies 232–310 (TAIVIKNIPF…RRLRVEWKRQ (79 aa)). Positions 355–420 (DPAILNVYSH…AKQVVITMPS (66 aa)) constitute an R3H domain.

In terms of assembly, interacts with csx1. Phosphorylated by sty1.

It localises to the cytoplasm. Functionally, regulates global gene expression after oxidative stress. Interacts and stabilizes mRNAs and may regulate their transition between different cytoplasmic components after oxidative stress. This chain is RNA-binding post-transcriptional regulator cip2 (cip2), found in Schizosaccharomyces pombe (strain 972 / ATCC 24843) (Fission yeast).